The primary structure comprises 452 residues: MEKQNLKNTEVNLIYGVDDDLDLPKKVLFGLQHIFAAFGGIIVVPLVIATSLGFDSKVTTALISASILGSGLATIIQAKGVGKVGARVACIMGTDFTFVSPAISVGSVLGLPGIIGATILGSLFEVILSFFIKPLMKFFPPLVTGTVVALIGLTLLPVSIDWAAGGAGSANYASLENLAVAMFVLVITLLLNNYGKGMISSASILIGIVVGYIVCIPLGLVDFTPVKEASWLSFPKILEFGVTFDAKAVMAFIPAYFVATIGTVGCLKAIGETSNIDIGDKRVAAGVLSDGVGSALGGLVGSCPNTSFSQNIGIISLTKVASRHVAVMAGILLVILGFLPKVAAIITGIPNPVLGGVGIMMFGTVAAAGIRTLSNIKLTERNLLIIAISMGLGLGVTFRPDVIHNLPEAIRMIFSSGISTGTIAALILNAVLKESPTSMEFENMYDEEKKAS.

Helical transmembrane passes span 34–54 (IFAA…SLGF), 58–78 (VTTA…IIQA), 83–103 (KVGA…SPAI), 108–128 (VLGL…EVIL), 138–158 (FFPP…LLPV), 172–192 (YASL…LLLN), 201–221 (SASI…LGLV), 250–270 (MAFI…LKAI), 326–346 (AVMA…AAII), 348–368 (GIPN…VAAA), 383–403 (LLII…PDVI), and 412–432 (MIFS…NAVL).

This sequence belongs to the nucleobase:cation symporter-2 (NCS2) (TC 2.A.40) family.

The protein localises to the cell membrane. The chain is Putative purine permease CPE0397 (cpx) from Clostridium perfringens (strain 13 / Type A).